Reading from the N-terminus, the 488-residue chain is N-succinylglutamate 5-semialdehyde dehydrogenase (488 aa).

221 to 226 (GSSRTG) contributes to the NAD(+) binding site. Catalysis depends on residues Glu244 and Cys278.

The protein belongs to the aldehyde dehydrogenase family. AstD subfamily.

It catalyses the reaction N-succinyl-L-glutamate 5-semialdehyde + NAD(+) + H2O = N-succinyl-L-glutamate + NADH + 2 H(+). The protein operates within amino-acid degradation; L-arginine degradation via AST pathway; L-glutamate and succinate from L-arginine: step 4/5. Catalyzes the NAD-dependent reduction of succinylglutamate semialdehyde into succinylglutamate. This chain is N-succinylglutamate 5-semialdehyde dehydrogenase, found in Pseudomonas syringae pv. tomato (strain ATCC BAA-871 / DC3000).